Reading from the N-terminus, the 185-residue chain is Ribosome-recycling factor (185 aa).

This sequence belongs to the RRF family.

It localises to the cytoplasm. In terms of biological role, responsible for the release of ribosomes from messenger RNA at the termination of protein biosynthesis. May increase the efficiency of translation by recycling ribosomes from one round of translation to another. The protein is Ribosome-recycling factor of Glaesserella parasuis serovar 5 (strain SH0165) (Haemophilus parasuis).